The chain runs to 166 residues: Regulatory protein RecX (166 aa).

It belongs to the RecX family.

Its subcellular location is the cytoplasm. Modulates RecA activity. In Salmonella paratyphi C (strain RKS4594), this protein is Regulatory protein RecX.